We begin with the raw amino-acid sequence, 362 residues long: Phosphoserine aminotransferase (362 aa).

L-glutamate-binding residues include Ser-9 and Arg-42. Pyridoxal 5'-phosphate-binding positions include 76–77 (GR), Trp-102, Thr-153, Asp-174, and Gln-197. Lys-198 carries the post-translational modification N6-(pyridoxal phosphate)lysine. Position 239-240 (239-240 (NT)) interacts with pyridoxal 5'-phosphate.

Belongs to the class-V pyridoxal-phosphate-dependent aminotransferase family. SerC subfamily. Homodimer. Pyridoxal 5'-phosphate is required as a cofactor.

It localises to the cytoplasm. It catalyses the reaction O-phospho-L-serine + 2-oxoglutarate = 3-phosphooxypyruvate + L-glutamate. The catalysed reaction is 4-(phosphooxy)-L-threonine + 2-oxoglutarate = (R)-3-hydroxy-2-oxo-4-phosphooxybutanoate + L-glutamate. Its pathway is amino-acid biosynthesis; L-serine biosynthesis; L-serine from 3-phospho-D-glycerate: step 2/3. The protein operates within cofactor biosynthesis; pyridoxine 5'-phosphate biosynthesis; pyridoxine 5'-phosphate from D-erythrose 4-phosphate: step 3/5. Catalyzes the reversible conversion of 3-phosphohydroxypyruvate to phosphoserine and of 3-hydroxy-2-oxo-4-phosphonooxybutanoate to phosphohydroxythreonine. The chain is Phosphoserine aminotransferase from Klebsiella pneumoniae (strain 342).